The following is a 526-amino-acid chain: tRNA modification GTPase MSS1, mitochondrial (526 aa).

The N-terminal 19 residues, 1 to 19 (MNSASFLQSRLISRSFLVR), are a transit peptide targeting the mitochondrion. The TrmE-type G domain occupies 274 to 444 (GIKLVLLGAP…LISTLTSNFE (171 aa)). GTP-binding positions include 281–288 (GAPNVGKS), 328–332 (DTAGI), and 394–397 (NKSD).

It belongs to the TRAFAC class TrmE-Era-EngA-EngB-Septin-like GTPase superfamily. TrmE GTPase family. Forms a heterodimer with MTO1.

It is found in the mitochondrion. Functionally, GTPase involved in the 5-carboxymethylaminomethyl modification (mnm(5)s(2)U34) of the wobble uridine base in mitochondrial tRNAs. Involved in the expression of cytochrome c oxidase subunit 1 (COX1). Works in association with the small subunit of mitoribosomes. This chain is tRNA modification GTPase MSS1, mitochondrial (MSS1), found in Saccharomyces cerevisiae (strain ATCC 204508 / S288c) (Baker's yeast).